Reading from the N-terminus, the 317-residue chain is Ribosomal protein L11 methyltransferase (317 aa).

Positions 162, 183, 205, and 248 each coordinate S-adenosyl-L-methionine.

This sequence belongs to the methyltransferase superfamily. PrmA family.

The protein localises to the cytoplasm. It carries out the reaction L-lysyl-[protein] + 3 S-adenosyl-L-methionine = N(6),N(6),N(6)-trimethyl-L-lysyl-[protein] + 3 S-adenosyl-L-homocysteine + 3 H(+). Its function is as follows. Methylates ribosomal protein L11. This is Ribosomal protein L11 methyltransferase from Alkaliphilus metalliredigens (strain QYMF).